The following is a 53-amino-acid chain: Rho GTPase-activating protein 6 (53 aa).

The protein localises to the cytoplasm. Its function is as follows. GTPase activator for the Rho-type GTPases by converting them to an inactive GDP-bound state. Could regulate the interactions of signaling molecules with the actin cytoskeleton. Promotes continuous elongation of cytoplasmic processes during cell motility and simultaneous retraction of the cell body changing the cell morphology. This Takifugu rubripes (Japanese pufferfish) protein is Rho GTPase-activating protein 6 (arhgap6).